Consider the following 433-residue polypeptide: Mannan endo-1,4-beta-mannosidase 2 (433 aa).

Positions 1–28 are cleaved as a signal peptide; it reads MAAPTGNGPVIPILGFLTCVAFIYLSFG. A glycan (N-linked (GlcNAc...) asparagine) is linked at N46. A substrate-binding site is contributed by W98. N-linked (GlcNAc...) asparagine glycosylation is present at N169. Residue N214 participates in substrate binding. E215 (proton donor) is an active-site residue. Residue Y295 participates in substrate binding. E335 acts as the Nucleophile in catalysis. A substrate-binding site is contributed by W377.

Belongs to the glycosyl hydrolase 5 (cellulase A) family. As to expression, expressed in roots, stems, leaves and seeds.

The protein localises to the secreted. The enzyme catalyses Random hydrolysis of (1-&gt;4)-beta-D-mannosidic linkages in mannans, galactomannans and glucomannans.. The polypeptide is Mannan endo-1,4-beta-mannosidase 2 (MAN2) (Arabidopsis thaliana (Mouse-ear cress)).